The sequence spans 365 residues: DNA replication and repair protein RecF (365 aa).

An ATP-binding site is contributed by 30–37 (GLNAQGKT).

The protein belongs to the RecF family.

It localises to the cytoplasm. In terms of biological role, the RecF protein is involved in DNA metabolism; it is required for DNA replication and normal SOS inducibility. RecF binds preferentially to single-stranded, linear DNA. It also seems to bind ATP. This chain is DNA replication and repair protein RecF, found in Chlamydia trachomatis serovar L2b (strain UCH-1/proctitis).